Here is a 309-residue protein sequence, read N- to C-terminus: Mitochondrial succinate-fumarate transporter 1 (309 aa).

Solcar repeat units follow at residues 11–96, 108–196, and 208–298; these read IPPY…FQTA, RGRF…FDIL, and LQPW…VTGL. 6 consecutive transmembrane segments (helical) span residues 17–37, 65–85, 111–131, 171–191, 214–234, and 273–293; these read AVSGSLGGVVEACCLQPIDVI, VRALWKGLTPFATHLTLKYTL, FLSGFGAGVLEALAIVTPFEV, GAAPTVMRNGTNQAVMFTAKN, MISGFLAGTAGPFCTGPFDVV, and GLLPRLMRIPPGQAIMWAVAD.

Belongs to the mitochondrial carrier (TC 2.A.29) family. In terms of tissue distribution, expressed in root tips, cotyledons, hypocotyls, leaves, trichomes, stems, flowers, carpels, anthers, pollen and abscission zone of siliques.

It is found in the mitochondrion inner membrane. In terms of biological role, may transport cytoplasmic succinate, derived from fatty acid oxidation, into the mitochondrial matrix in exchange of fumarate during lipid mobilization in seed germination. Conversion of seed-reserved triacylglycerols into sucrose is necessary for growth before the onset of photosynthesis and involves fatty acid beta-oxidation, the glyoxylate cycle and gluconeogenesis. This is Mitochondrial succinate-fumarate transporter 1 (SFC1) from Arabidopsis thaliana (Mouse-ear cress).